A 210-amino-acid polypeptide reads, in one-letter code: Outer-membrane lipoprotein carrier protein (210 aa).

The N-terminal stretch at 1–23 (MLMFSRFRYIFFAVALLSGPVCA) is a signal peptide.

Belongs to the LolA family. Monomer.

It is found in the periplasm. Functionally, participates in the translocation of lipoproteins from the inner membrane to the outer membrane. Only forms a complex with a lipoprotein if the residue after the N-terminal Cys is not an aspartate (The Asp acts as a targeting signal to indicate that the lipoprotein should stay in the inner membrane). The polypeptide is Outer-membrane lipoprotein carrier protein (Xylella fastidiosa (strain Temecula1 / ATCC 700964)).